The chain runs to 234 residues: Large ribosomal subunit protein uL1 (234 aa).

Belongs to the universal ribosomal protein uL1 family. As to quaternary structure, part of the 50S ribosomal subunit.

Binds directly to 23S rRNA. The L1 stalk is quite mobile in the ribosome, and is involved in E site tRNA release. Functionally, protein L1 is also a translational repressor protein, it controls the translation of the L11 operon by binding to its mRNA. The chain is Large ribosomal subunit protein uL1 from Maridesulfovibrio salexigens (strain ATCC 14822 / DSM 2638 / NCIMB 8403 / VKM B-1763) (Desulfovibrio salexigens).